The chain runs to 350 residues: DNA primase small subunit PriS (350 aa).

Catalysis depends on residues Asp97, Asp99, and Asp251.

It belongs to the eukaryotic-type primase small subunit family. In terms of assembly, heterodimer of a small subunit (PriS) and a large subunit (PriL). Mg(2+) is required as a cofactor. Requires Mn(2+) as cofactor. It depends on Zn(2+) as a cofactor.

Catalytic subunit of DNA primase, an RNA polymerase that catalyzes the synthesis of short RNA molecules used as primers for DNA polymerase during DNA replication. The small subunit contains the primase catalytic core and has DNA synthesis activity on its own. Binding to the large subunit stabilizes and modulates the activity, increasing the rate of DNA synthesis while decreasing the length of the DNA fragments, and conferring RNA synthesis capability. The DNA polymerase activity may enable DNA primase to also catalyze primer extension after primer synthesis. May also play a role in DNA repair. This chain is DNA primase small subunit PriS, found in Methanocaldococcus jannaschii (strain ATCC 43067 / DSM 2661 / JAL-1 / JCM 10045 / NBRC 100440) (Methanococcus jannaschii).